The following is a 130-amino-acid chain: Small ribosomal subunit protein uS11 (130 aa).

This sequence belongs to the universal ribosomal protein uS11 family. In terms of assembly, part of the 30S ribosomal subunit. Interacts with proteins S7 and S18. Binds to IF-3.

Functionally, located on the platform of the 30S subunit, it bridges several disparate RNA helices of the 16S rRNA. Forms part of the Shine-Dalgarno cleft in the 70S ribosome. The chain is Small ribosomal subunit protein uS11 from Prochlorococcus marinus (strain MIT 9313).